The following is a 371-amino-acid chain: Lipoyl synthase, mitochondrial (371 aa).

A mitochondrion-targeting transit peptide spans 1–24; sequence MLSRFKCSRLQLQKRAISVTKATT. Polar residues predominate over residues 20 to 29; sequence TKATTTTASQ. The segment at 20–42 is disordered; it reads TKATTTTASQPKRRRTTTFSDAL. 7 residues coordinate [4Fe-4S] cluster: C107, C112, C118, C138, C142, C145, and S353. One can recognise a Radical SAM core domain in the interval 121–342; it reads GGDSSKATAT…RDKALELGFL (222 aa).

The protein belongs to the radical SAM superfamily. Lipoyl synthase family. The cofactor is [4Fe-4S] cluster.

It is found in the mitochondrion. It carries out the reaction [[Fe-S] cluster scaffold protein carrying a second [4Fe-4S](2+) cluster] + N(6)-octanoyl-L-lysyl-[protein] + 2 oxidized [2Fe-2S]-[ferredoxin] + 2 S-adenosyl-L-methionine + 4 H(+) = [[Fe-S] cluster scaffold protein] + N(6)-[(R)-dihydrolipoyl]-L-lysyl-[protein] + 4 Fe(3+) + 2 hydrogen sulfide + 2 5'-deoxyadenosine + 2 L-methionine + 2 reduced [2Fe-2S]-[ferredoxin]. It functions in the pathway protein modification; protein lipoylation via endogenous pathway; protein N(6)-(lipoyl)lysine from octanoyl-[acyl-carrier-protein]: step 2/2. Functionally, catalyzes the radical-mediated insertion of two sulfur atoms into the C-6 and C-8 positions of the octanoyl moiety bound to the lipoyl domains of lipoate-dependent enzymes, thereby converting the octanoylated domains into lipoylated derivatives. In Lachancea thermotolerans (strain ATCC 56472 / CBS 6340 / NRRL Y-8284) (Yeast), this protein is Lipoyl synthase, mitochondrial.